Reading from the N-terminus, the 269-residue chain is 3-methyl-2-oxobutanoate hydroxymethyltransferase (269 aa).

Mg(2+) is bound by residues D51 and D90. 3-methyl-2-oxobutanoate is bound by residues 51–52, D90, and K120; that span reads DS. E122 contributes to the Mg(2+) binding site. E187 functions as the Proton acceptor in the catalytic mechanism.

The protein belongs to the PanB family. As to quaternary structure, homodecamer; pentamer of dimers. It depends on Mg(2+) as a cofactor.

Its subcellular location is the cytoplasm. It catalyses the reaction 3-methyl-2-oxobutanoate + (6R)-5,10-methylene-5,6,7,8-tetrahydrofolate + H2O = 2-dehydropantoate + (6S)-5,6,7,8-tetrahydrofolate. It participates in cofactor biosynthesis; (R)-pantothenate biosynthesis; (R)-pantoate from 3-methyl-2-oxobutanoate: step 1/2. Its function is as follows. Catalyzes the reversible reaction in which hydroxymethyl group from 5,10-methylenetetrahydrofolate is transferred onto alpha-ketoisovalerate to form ketopantoate. This chain is 3-methyl-2-oxobutanoate hydroxymethyltransferase, found in Tropheryma whipplei (strain TW08/27) (Whipple's bacillus).